The chain runs to 280 residues: uncharacterized protein (280 aa).

3 consecutive transmembrane segments (helical) span residues 10–29 (IQQN…LLFN), 164–186 (FVFV…FAFI), and 209–228 (IFGL…YFLL).

The protein localises to the cell membrane. This is an uncharacterized protein from Bacillus subtilis (strain 168).